We begin with the raw amino-acid sequence, 621 residues long: Methionine--tRNA ligase (621 aa).

The short motif at 11-21 (PYANGPRHIGH) is the 'HIGH' region element. Residues Cys143, Cys146, Cys156, and Cys159 each coordinate Zn(2+). Positions 347–351 (KFSSS) match the 'KMSKS' region motif. Ser350 provides a ligand contact to ATP.

Belongs to the class-I aminoacyl-tRNA synthetase family. MetG type 1 subfamily. In terms of assembly, monomer. Zn(2+) is required as a cofactor.

It is found in the cytoplasm. The catalysed reaction is tRNA(Met) + L-methionine + ATP = L-methionyl-tRNA(Met) + AMP + diphosphate. Its function is as follows. Is required not only for elongation of protein synthesis but also for the initiation of all mRNA translation through initiator tRNA(fMet) aminoacylation. This chain is Methionine--tRNA ligase, found in Bifidobacterium longum subsp. infantis (strain ATCC 15697 / DSM 20088 / JCM 1222 / NCTC 11817 / S12).